The following is a 130-amino-acid chain: Small ribosomal subunit protein uS9 (130 aa).

The disordered stretch occupies residues 110-130; the sequence is AKERKKYGRKGARARFQFSKR. Positions 111–130 are enriched in basic residues; it reads KERKKYGRKGARARFQFSKR.

Belongs to the universal ribosomal protein uS9 family.

In Syntrophotalea carbinolica (strain DSM 2380 / NBRC 103641 / GraBd1) (Pelobacter carbinolicus), this protein is Small ribosomal subunit protein uS9.